Consider the following 124-residue polypeptide: Translation initiation factor 5A (124 aa).

A Hypusine modification is found at Lys-36.

The protein belongs to the eIF-5A family.

The protein localises to the cytoplasm. Functionally, functions by promoting the formation of the first peptide bond. The protein is Translation initiation factor 5A of Haloquadratum walsbyi (strain DSM 16790 / HBSQ001).